Here is a 778-residue protein sequence, read N- to C-terminus: Protein PHOTOPERIODIC CONTROL OF HYPOCOTYL 1 (778 aa).

3 disordered regions span residues 74–95 (QKRE…VGSS), 186–283 (HNRG…NSAT), and 316–335 (KTSP…KEAS). Residues 198–212 (SSKDTQEDGPRKNES) are compositionally biased toward basic and acidic residues. The segment covering 230–247 (SGSISSSSTKGKGIKGYS) has biased composition (low complexity). A compositionally biased stretch (basic and acidic residues) spans 265–275 (PDRENSVDGHQ). A compositionally biased stretch (polar residues) spans 317–326 (TSPSDSSETK). Residues 470–505 (WPLLPNDLLELIMGHLETSFEIFLFRSVCSSWRSVV) form the F-box domain.

As to quaternary structure, interacts with light-activated phyB. Binds directly to PIF1 and COP1. Post-translationally, ubiquitinated by COP1 in darkness; this leads to proteasomal degradation. As to expression, mainly expressed in cotyledons, hypocotyls, leaves and roots.

It localises to the nucleus. Together with PCHL, regulates growth and development adaptation to the ambient environment by controlling negatively phytochrome B (phyB) dark reversion, a temperature-dependent thermal relaxation process during which phyB reverts from the active to the inactive state. Contributes to red (R) light-triggered photomorphogenesis. Promotes various light responses such as seed germination, hypocotyl gravitropism and chlorophyll biosynthesis, via direct interaction with PIF1 and COP1. Prevents DNA-binding ability of PIF1 to negatively regulate the expressions of its target genes. Facilitates the physical interaction between phyB and PIF1 and the subsequent light-induced degradation of PIF1. The polypeptide is Protein PHOTOPERIODIC CONTROL OF HYPOCOTYL 1 (Arabidopsis thaliana (Mouse-ear cress)).